The chain runs to 132 residues: Hemoglobin heart muscle subunit alpha-type (132 aa).

Residues 1-132 enclose the Globin domain; that stretch reads GLSDSEKSAV…GEVGAILTSS (132 aa). Positions 58 and 83 each coordinate heme b.

Belongs to the globin family. As to quaternary structure, monomer.

Functionally, this hemoglobin may replace myocardial myoglobin in this amphibian species. The protein is Hemoglobin heart muscle subunit alpha-type of Aquarana catesbeiana (American bullfrog).